The primary structure comprises 284 residues: D-tagatose-1,6-bisphosphate aldolase subunit GatY (284 aa).

Catalysis depends on D82, which acts as the Proton donor. Residues H83 and H180 each coordinate Zn(2+). G181 lines the dihydroxyacetone phosphate pocket. Position 208 (H208) interacts with Zn(2+). Dihydroxyacetone phosphate contacts are provided by residues 209–211 (GAS) and 230–233 (NVAT).

It belongs to the class II fructose-bisphosphate aldolase family. TagBP aldolase GatY subfamily. In terms of assembly, forms a complex with GatZ. Zn(2+) serves as cofactor.

It catalyses the reaction D-tagatofuranose 1,6-bisphosphate = D-glyceraldehyde 3-phosphate + dihydroxyacetone phosphate. It participates in carbohydrate metabolism; D-tagatose 6-phosphate degradation; D-glyceraldehyde 3-phosphate and glycerone phosphate from D-tagatose 6-phosphate: step 2/2. Functionally, catalytic subunit of the tagatose-1,6-bisphosphate aldolase GatYZ, which catalyzes the reversible aldol condensation of dihydroxyacetone phosphate (DHAP or glycerone-phosphate) with glyceraldehyde 3-phosphate (G3P) to produce tagatose 1,6-bisphosphate (TBP). Requires GatZ subunit for full activity and stability. Is involved in the catabolism of galactitol. This chain is D-tagatose-1,6-bisphosphate aldolase subunit GatY, found in Salmonella enteritidis PT4 (strain P125109).